Here is a 71-residue protein sequence, read N- to C-terminus: Protein CYSTEINE-RICH TRANSMEMBRANE MODULE 6 (71 aa).

The segment covering 1–12 (MSQYSQNQSSGA) has biased composition (polar residues). The tract at residues 1–36 (MSQYSQNQSSGAYPTPPVSTGPYVAPPPLGYPTNDT) is disordered. The segment covering 14-30 (PTPPVSTGPYVAPPPLG) has biased composition (pro residues). Residues 48-64 (SKGDGFLKGCLAAMCCC) form a helical membrane-spanning segment.

The protein belongs to the CYSTM1 family. In terms of assembly, homodimer and heterodimers. Interacts with CYSTM7 and WIH1/CYSTM13. As to expression, mostly expressed in roots, stems, rosette leaves and siliques and, to a lower extent, in flowers and cauline leaves.

It localises to the cell membrane. Its subcellular location is the cytoplasm. Its function is as follows. Involved in resistance to abiotic stress. In Arabidopsis thaliana (Mouse-ear cress), this protein is Protein CYSTEINE-RICH TRANSMEMBRANE MODULE 6.